A 500-amino-acid chain; its full sequence is Glutathione gamma-glutamylcysteinyltransferase 1 (500 aa).

The 221-residue stretch at 1–221 (MEVASLYRRV…GFMLVSRRSS (221 aa)) folds into the Peptidase C83 domain. Catalysis depends on residues Cys-56, His-162, and Asp-180.

It belongs to the phytochelatin synthase family. As to expression, expressed in roots and shoots.

The enzyme catalyses [Glu(-Cys)](n)-Gly + glutathione + H(+) = [Glu(-Cys)](n+1)-Gly + glycine. With respect to regulation, requires cadmium for activity. Functionally, involved in the synthesis of phytochelatins (PC) and homophytochelatins (hPC), the heavy-metal-binding peptides of plants. This chain is Glutathione gamma-glutamylcysteinyltransferase 1 (PCS1), found in Triticum aestivum (Wheat).